Consider the following 545-residue polypeptide: Glucans biosynthesis protein G (545 aa).

Positions 1–34 (MVSLLRCQSFKPSSSLICSLALSAAFALSSSAFA) are cleaved as a signal peptide. Residues 38 to 60 (KPAENKPATPVVSPPKATAQPAN) are disordered.

Belongs to the OpgD/OpgG family.

The protein resides in the periplasm. The protein operates within glycan metabolism; osmoregulated periplasmic glucan (OPG) biosynthesis. Involved in the biosynthesis of osmoregulated periplasmic glucans (OPGs). The chain is Glucans biosynthesis protein G from Shewanella sp. (strain ANA-3).